The following is a 247-amino-acid chain: Protein NipSnap homolog 3A (247 aa).

N6-acetyllysine occurs at positions 48 and 166.

It belongs to the NipSnap family. As to quaternary structure, interacts with the Salmonella typhimurium virulence protein spiC. As to expression, ubiquitous. Highly expressed in liver, kidney and muscle. Expressed at intermediate level in brain, heart, colon, thymus, kidney, small intestine, placenta, lung, leukocytes and spleen.

The protein resides in the cytoplasm. Its subcellular location is the cytosol. The polypeptide is Protein NipSnap homolog 3A (NIPSNAP3A) (Homo sapiens (Human)).